We begin with the raw amino-acid sequence, 425 residues long: Adenylosuccinate synthetase (425 aa).

GTP-binding positions include 12 to 18 (GDEGKAK) and 40 to 42 (GHT). The active-site Proton acceptor is the Asp-13. Mg(2+) is bound by residues Asp-13 and Gly-40. IMP contacts are provided by residues 13 to 16 (DEGK), 38 to 41 (NAGH), Thr-130, Arg-144, Gln-224, Thr-239, and Arg-303. The Proton donor role is filled by His-41. 299 to 305 (ATTGRPR) is a substrate binding site. GTP is bound by residues Arg-305, 331–333 (KID), and 411–413 (STG).

The protein belongs to the adenylosuccinate synthetase family. In terms of assembly, homodimer. Requires Mg(2+) as cofactor.

It is found in the cytoplasm. The enzyme catalyses IMP + L-aspartate + GTP = N(6)-(1,2-dicarboxyethyl)-AMP + GDP + phosphate + 2 H(+). The protein operates within purine metabolism; AMP biosynthesis via de novo pathway; AMP from IMP: step 1/2. In terms of biological role, plays an important role in the de novo pathway of purine nucleotide biosynthesis. Catalyzes the first committed step in the biosynthesis of AMP from IMP. The sequence is that of Adenylosuccinate synthetase from Leptospira interrogans serogroup Icterohaemorrhagiae serovar copenhageni (strain Fiocruz L1-130).